The sequence spans 441 residues: Ribosomal protein uS12 methylthiotransferase RimO (441 aa).

Residues 7-117 form the MTTase N-terminal domain; the sequence is PKISFVSLGC…VLEAVHRAKP (111 aa). Cys-16, Cys-52, Cys-81, Cys-148, Cys-152, and Cys-155 together coordinate [4Fe-4S] cluster. A Radical SAM core domain is found at 134-371; it reads LTPRHYAYLK…MARQQVISAR (238 aa). Residues 374 to 440 enclose the TRAM domain; that stretch reads KRKVGTRQQI…AYDLHGTVAG (67 aa).

The protein belongs to the methylthiotransferase family. RimO subfamily. [4Fe-4S] cluster serves as cofactor.

Its subcellular location is the cytoplasm. The catalysed reaction is L-aspartate(89)-[ribosomal protein uS12]-hydrogen + (sulfur carrier)-SH + AH2 + 2 S-adenosyl-L-methionine = 3-methylsulfanyl-L-aspartate(89)-[ribosomal protein uS12]-hydrogen + (sulfur carrier)-H + 5'-deoxyadenosine + L-methionine + A + S-adenosyl-L-homocysteine + 2 H(+). In terms of biological role, catalyzes the methylthiolation of an aspartic acid residue of ribosomal protein uS12. This is Ribosomal protein uS12 methylthiotransferase RimO from Rhodopseudomonas palustris (strain BisB5).